The chain runs to 257 residues: ATP synthase subunit a (257 aa).

Positions 1–8 are cleaved as a propeptide — removed in mature form; it reads MRHLDFVL. Helical transmembrane passes span 34 to 54, 93 to 113, 122 to 142, 149 to 169, 187 to 207, 210 to 230, and 231 to 251; these read LTNI…YSLL, FFPL…IGLV, HFIL…ILGF, FFSL…LVLI, ANIL…YNIM, GIIF…FSGL, and ELAI…SYIK.

It belongs to the ATPase A chain family. In terms of assembly, F-type ATPases have 2 components, CF(1) - the catalytic core - and CF(0) - the membrane proton channel. CF(1) has five subunits: alpha(3), beta(3), gamma(1), delta(1), epsilon(1). CF(0) has three main subunits: a, b and c.

It is found in the mitochondrion inner membrane. Its function is as follows. Mitochondrial membrane ATP synthase (F(1)F(0) ATP synthase or Complex V) produces ATP from ADP in the presence of a proton gradient across the membrane which is generated by electron transport complexes of the respiratory chain. F-type ATPases consist of two structural domains, F(1) - containing the extramembraneous catalytic core and F(0) - containing the membrane proton channel, linked together by a central stalk and a peripheral stalk. During catalysis, ATP synthesis in the catalytic domain of F(1) is coupled via a rotary mechanism of the central stalk subunits to proton translocation. Key component of the proton channel; it may play a direct role in the translocation of protons across the membrane. The polypeptide is ATP synthase subunit a (atp6) (Penicillium chrysogenum (Penicillium notatum)).